Here is a 375-residue protein sequence, read N- to C-terminus: B3 domain-containing protein REM-like 2 (375 aa).

3 DNA-binding regions (TF-B3) span residues 51–147 (SFVA…KRLY), 131–226 (FVTV…YGTN), and 277–375 (RLVI…KSGK).

It is found in the nucleus. This is B3 domain-containing protein REM-like 2 from Arabidopsis thaliana (Mouse-ear cress).